The sequence spans 1024 residues: Beta-galactosidase (1024 aa).

Substrate is bound by residues asparagine 103 and aspartate 202. Aspartate 202 provides a ligand contact to Na(+). Mg(2+) contacts are provided by glutamate 417, histidine 419, and glutamate 462. Substrate-binding positions include glutamate 462 and 538 to 541 (EYAH). Glutamate 462 functions as the Proton donor in the catalytic mechanism. Glutamate 538 functions as the Nucleophile in the catalytic mechanism. Asparagine 598 serves as a coordination point for Mg(2+). Na(+) contacts are provided by phenylalanine 602 and asparagine 605. Residues asparagine 605 and tryptophan 1000 each contribute to the substrate site.

The protein belongs to the glycosyl hydrolase 2 family. As to quaternary structure, homotetramer. Mg(2+) serves as cofactor. It depends on Na(+) as a cofactor.

The enzyme catalyses Hydrolysis of terminal non-reducing beta-D-galactose residues in beta-D-galactosides.. The chain is Beta-galactosidase from Escherichia coli O127:H6 (strain E2348/69 / EPEC).